Reading from the N-terminus, the 440-residue chain is MKMHFCIPVSQQRSDALGGRYVLYSVHLDGFLFCRVRYSQLHGWNEQLRRVFGNCLPPFPPKYYLAMTTAMADERRDQLEQYLQNVTMDPNVLRSDVFVEFLKLAQLNTFDIATKKAYLDIFLPNEQSIRIEIITSDTAERVLEVVSHKIGLCRELLGYFGLFLIRFGKEGKLSVVKKLADFELPYVSLGSSEVENCKVGLRKWYMAPSLDSVLMDCRVAVDLLYMQAIQDIEKGWAKPTQAQRQKLEAFQKEDSQTKFLELAREVRHYGYLQLDPCTCDYPESGSGAVLSVGNNEISCCITLPDSQTQDIVFQMSRVKCWQVTFLGTLLDTDGPQRTLNQNLELRFQYSEDSCWQWFVIYTKQAFLLSSCLKKMISEKMVKLAAENTEMQIEVPEQSKSKKYHIQQSQQKDYSSFLSRKSKIKIAKDDCVFGNIKEEDL.

The PX domain occupies 1–109; that stretch reads MKMHFCIPVS…EFLKLAQLNT (109 aa).

Belongs to the sorting nexin family. Interacts with CCDC22, CCDC93, VPS26C and VPS35L, associates with the retriever and CCC complexes.

In terms of biological role, may be involved in protein trafficking. In Homo sapiens (Human), this protein is Sorting nexin-31 (SNX31).